A 255-amino-acid polypeptide reads, in one-letter code: Putative oxidoreductase YtkK (255 aa).

7-14 (TAGSKGLG) provides a ligand contact to NAD(+).

This sequence belongs to the short-chain dehydrogenases/reductases (SDR) family.

The chain is Putative oxidoreductase YtkK (ytkK) from Bacillus subtilis (strain 168).